Reading from the N-terminus, the 650-residue chain is Chaperone protein DnaK (650 aa).

Threonine 200 is subject to Phosphothreonine; by autocatalysis. The tract at residues 614–635 (AGAAGAAGAAEGAAHAGGAQQA) is disordered.

It belongs to the heat shock protein 70 family.

Functionally, acts as a chaperone. The polypeptide is Chaperone protein DnaK (Burkholderia lata (strain ATCC 17760 / DSM 23089 / LMG 22485 / NCIMB 9086 / R18194 / 383)).